Reading from the N-terminus, the 120-residue chain is UPF0102 protein CbuK_0265 (120 aa).

Belongs to the UPF0102 family.

The protein is UPF0102 protein CbuK_0265 of Coxiella burnetii (strain CbuK_Q154) (Coxiella burnetii (strain Q154)).